We begin with the raw amino-acid sequence, 96 residues long: Large ribosomal subunit protein eL21 (96 aa).

The tract at residues 1 to 37 (MPSSNGPMTGTRDKLSNSPRERGMSPPQRAIQEYDEG) is disordered. Residues 11-23 (TRDKLSNSPRERG) are compositionally biased toward basic and acidic residues.

This sequence belongs to the eukaryotic ribosomal protein eL21 family.

The sequence is that of Large ribosomal subunit protein eL21 from Haloquadratum walsbyi (strain DSM 16790 / HBSQ001).